Consider the following 565-residue polypeptide: Periplasmic trehalase (565 aa).

An N-terminal signal peptide occupies residues 1–30 (MKSPAPSRPQKMALIPACIFLCFAALSVQA). Substrate-binding positions include Arg-152, 159-160 (WD), Asn-196, 205-207 (RSQ), 277-279 (RPE), and Gly-310. Residues Asp-312 and Glu-496 each act as proton donor/acceptor in the active site. Glu-511 provides a ligand contact to substrate. Positions 539 to 565 (CDNVPATRPLSESTTQPLKQKEAEPTP) are disordered.

This sequence belongs to the glycosyl hydrolase 37 family. In terms of assembly, monomer.

Its subcellular location is the periplasm. The catalysed reaction is alpha,alpha-trehalose + H2O = alpha-D-glucose + beta-D-glucose. Its function is as follows. Provides the cells with the ability to utilize trehalose at high osmolarity by splitting it into glucose molecules that can subsequently be taken up by the phosphotransferase-mediated uptake system. This is Periplasmic trehalase from Escherichia coli O1:K1 / APEC.